The chain runs to 252 residues: Coenzyme F420:L-glutamate ligase (252 aa).

GTP contacts are provided by residues 11–14 (MPLV), 45–46 (ET), and Lys50. Asp115 is a binding site for a divalent metal cation. Asn118 contacts GTP. A divalent metal cation contacts are provided by Asp156, Thr157, and Gln214. Residue 212 to 219 (MGQADEGV) coordinates GTP.

It belongs to the CofE family. Homodimer. The cofactor is Mg(2+). Mn(2+) is required as a cofactor. It depends on K(+) as a cofactor.

It carries out the reaction oxidized coenzyme F420-0 + GTP + L-glutamate = oxidized coenzyme F420-1 + GDP + phosphate + H(+). The enzyme catalyses oxidized coenzyme F420-1 + GTP + L-glutamate = oxidized coenzyme F420-2 + GDP + phosphate + H(+). It participates in cofactor biosynthesis; coenzyme F420 biosynthesis. Catalyzes the GTP-dependent successive addition of two or more gamma-linked L-glutamates to the L-lactyl phosphodiester of 7,8-didemethyl-8-hydroxy-5-deazariboflavin (F420-0) to form coenzyme F420-0-glutamyl-glutamate (F420-2) or polyglutamated F420 derivatives. The sequence is that of Coenzyme F420:L-glutamate ligase from Methanothermobacter thermautotrophicus (strain ATCC 29096 / DSM 1053 / JCM 10044 / NBRC 100330 / Delta H) (Methanobacterium thermoautotrophicum).